Consider the following 279-residue polypeptide: Pantothenate synthetase (279 aa).

30-37 (MGALHAGH) lines the ATP pocket. Catalysis depends on histidine 37, which acts as the Proton donor. Glutamine 61 provides a ligand contact to (R)-pantoate. Residue glutamine 61 participates in beta-alanine binding. 147–150 (GEKD) serves as a coordination point for ATP. Glutamine 153 contributes to the (R)-pantoate binding site. ATP-binding positions include alanine 176 and 184–187 (LSSR).

The protein belongs to the pantothenate synthetase family. As to quaternary structure, homodimer.

Its subcellular location is the cytoplasm. It carries out the reaction (R)-pantoate + beta-alanine + ATP = (R)-pantothenate + AMP + diphosphate + H(+). The protein operates within cofactor biosynthesis; (R)-pantothenate biosynthesis; (R)-pantothenate from (R)-pantoate and beta-alanine: step 1/1. Catalyzes the condensation of pantoate with beta-alanine in an ATP-dependent reaction via a pantoyl-adenylate intermediate. The protein is Pantothenate synthetase of Sphingopyxis alaskensis (strain DSM 13593 / LMG 18877 / RB2256) (Sphingomonas alaskensis).